The sequence spans 566 residues: Interleukin-1 receptor-like 1 (566 aa).

An N-terminal signal peptide occupies residues 1 to 26 (MIGKWRMGLWALAILTVPMYFIVTEG). 3 consecutive Ig-like C2-type domains span residues 27–109 (RKTS…LNVT), 120–207 (PDYM…RSFT), and 217–323 (PVIT…VRLR). The Extracellular portion of the chain corresponds to 27-331 (RKTSWGLENE…LRRKQPIDHQ (305 aa)). The cysteines at positions 42 and 93 are disulfide-linked. N-linked (GlcNAc...) asparagine glycosylation is found at N107, N146, and N194. Intrachain disulfides connect C117–C157 and C139–C187. The flexible linker stretch occupies residues 204 to 216 (RSFTVEEKGFSTF). N-linked (GlcNAc...) asparagine glycans are attached at residues N225, N258, and N277. 2 disulfide bridges follow: C240–C307 and C243–C286. Residue K325 forms a Glycyl lysine isopeptide (Lys-Gly) (interchain with G-Cter in ubiquitin) linkage. Residues 332-354 (STYYIVAGCSLLLMFINVLVIVL) traverse the membrane as a helical segment. The Cytoplasmic portion of the chain corresponds to 355–566 (KVFWIEVALF…GKVCLDLKHF (212 aa)). The 161-residue stretch at 379 to 539 (KLYDAYIIYP…KFWKHVRYQM (161 aa)) folds into the TIR domain. At S441 the chain carries Phosphoserine. The active site involves E465.

The protein belongs to the interleukin-1 receptor family. In terms of assembly, interacts with MYD88, IRAK1, IRAK4, and TRAF6. Bound to its ligand IL-33, interacts with IL1RAP to form the minimal interleukin-33 signaling complex with a 1:1:1 stoichiometry. Interacts with KIT (bound to KITLG/SCF). A mast cell-specific KITLG/SCF-induced interleukin-33 signaling complex contains IL1RL1, IL1RAP, KIT and MYD88. Interacts with TMED1. Post-translationally, phosphorylated by GSK3B at Ser-441; leading to proteasomal degradation. In terms of processing, ubiquitinated at Lys-325 in a FBXL19-mediated manner; leading to proteasomal degradation. Ubiquitination by TRAF6 via 'Lys-27'-linked polyubiquitination and deubiquitination by USP38 serves as a critical regulatory mechanism for fine-tuning IL1RL1-mediated inflammatory response. In terms of tissue distribution, isoform A is detected in spleen, lung, bone marrow and lymh node. Isoform B is predominant in fibroblasts.

It localises to the cell membrane. Its subcellular location is the secreted. It catalyses the reaction NAD(+) + H2O = ADP-D-ribose + nicotinamide + H(+). Functionally, receptor for interleukin-33 (IL-33) which plays crucial roles in innate and adaptive immunity, contributing to tissue homeostasis and responses to environmental stresses together with coreceptor IL1RAP. Its stimulation recruits MYD88, IRAK1, IRAK4, and TRAF6, followed by phosphorylation of MAPK3/ERK1 and/or MAPK1/ERK2, MAPK14, and MAPK8. Possibly involved in helper T-cell function. Upon tissue injury, induces UCP2-dependent mitochondrial rewiring that attenuates the generation of reactive oxygen species and preserves the integrity of Krebs cycle required for persistent production of itaconate and subsequent GATA3-dependent differentiation of inflammation-resolving alternatively activated macrophages. In terms of biological role, inhibits IL-33 signaling. This chain is Interleukin-1 receptor-like 1 (Il1rl1), found in Rattus norvegicus (Rat).